The following is a 445-amino-acid chain: Sodium/proton-dependent alanine carrier protein (445 aa).

9 helical membrane passes run 41–61, 103–123, 129–149, 159–179, 188–208, 249–269, 304–324, 349–369, and 375–395; these read IAYG…IGAA, AAII…SIAD, FGIP…FTIF, AEIV…AIIA, VFGL…GILG, AFSI…MILF, TLFP…FAFT, AFFA…VKTA, and MGDI…LLLF.

The protein belongs to the alanine or glycine:cation symporter (AGCS) (TC 2.A.25) family. In terms of processing, the N-terminus is blocked.

Its subcellular location is the cell membrane. Functionally, mediates the active transport of alanine, driven by either an H(+) or Na(+) gradient. In Bacillus sp. (strain PS3), this protein is Sodium/proton-dependent alanine carrier protein.